Consider the following 267-residue polypeptide: Hydroxyethylthiazole kinase (267 aa).

Methionine 46 is a substrate binding site. ATP is bound by residues arginine 121 and threonine 167. Alanine 194 contacts substrate.

This sequence belongs to the Thz kinase family. The cofactor is Mg(2+).

It carries out the reaction 5-(2-hydroxyethyl)-4-methylthiazole + ATP = 4-methyl-5-(2-phosphooxyethyl)-thiazole + ADP + H(+). It functions in the pathway cofactor biosynthesis; thiamine diphosphate biosynthesis; 4-methyl-5-(2-phosphoethyl)-thiazole from 5-(2-hydroxyethyl)-4-methylthiazole: step 1/1. In terms of biological role, catalyzes the phosphorylation of the hydroxyl group of 4-methyl-5-beta-hydroxyethylthiazole (THZ). This chain is Hydroxyethylthiazole kinase, found in Rhizobium johnstonii (strain DSM 114642 / LMG 32736 / 3841) (Rhizobium leguminosarum bv. viciae).